We begin with the raw amino-acid sequence, 414 residues long: Protein ABHD18 (414 aa).

Positions 1–24 (MGVSKLDILYRRLLLTKLFIRGWG) are cleaved as a signal peptide. N-linked (GlcNAc...) asparagine glycans are attached at residues N282 and N307.

Belongs to the AB hydrolase superfamily.

The protein localises to the secreted. This Homo sapiens (Human) protein is Protein ABHD18.